Here is a 309-residue protein sequence, read N- to C-terminus: Putative pyridoxal kinase C6F6.11c (309 aa).

S12 and Y123 together coordinate substrate. ATP contacts are provided by residues 182–183 and 209–221; these read SS and LIPV…RGTG. Position 222 (D222) interacts with substrate.

Belongs to the pyridoxine kinase family. A divalent metal cation is required as a cofactor.

The protein localises to the cytoplasm. Its subcellular location is the nucleus. It catalyses the reaction pyridoxal + ATP = pyridoxal 5'-phosphate + ADP + H(+). Functionally, required for synthesis of pyridoxal-5-phosphate from vitamin B6. The sequence is that of Putative pyridoxal kinase C6F6.11c from Schizosaccharomyces pombe (strain 972 / ATCC 24843) (Fission yeast).